We begin with the raw amino-acid sequence, 753 residues long: Dolichyl-phosphate-mannose--protein mannosyltransferase 3 (753 aa).

Residues 1–50 (MPYRVATGYSEKSTDDDLIWRTPIVKEELEDADNFLKDDAELYDKVKNES) are Cytoplasmic-facing. Residues 51–71 (AVSHLDTIVMPIIFTVLGMFT) form a helical membrane-spanning segment. The Lumenal portion of the chain corresponds to 72 to 148 (RMYKIGRNNH…IDYVKMRLFQ (77 aa)). An N-linked (GlcNAc...) asparagine glycan is attached at Asn124. A helical transmembrane segment spans residues 149–169 (AMFSSLCVPLAYFTGRAIGFS). At 170 to 174 (RLSVW) the chain is on the cytoplasmic side. A helical membrane pass occupies residues 175–195 (LFTILVIFENSYATLGKFILL). The Lumenal segment spans residues 196-235 (DSMLLFFTVSSYFCLAKFHTMRKSPFSARWWLWLCLTGLN). The chain crosses the membrane as a helical span at residues 236–256 (LGCAISVKMVGLFIISVVGIY). Residues 257 to 282 (TISELWNLLSDRSVSWKVYVNHWLAR) lie on the Cytoplasmic side of the membrane. Residues 283–303 (IFGLIIIPVCVFLLCFKIHFD) traverse the membrane as a helical segment. The Lumenal segment spans residues 304–602 (LLSNSGPGDS…IKYFLLGSPA (299 aa)). Asn324 carries an N-linked (GlcNAc...) asparagine glycan. In terms of domain architecture, MIR 1 spans 332–387 (PRDVALGSSIISIKNQALGGALLHSHVQPFPEGSEQQQVTVYGYSDANNEWFFQRI). An N-linked (GlcNAc...) asparagine glycan is attached at Asn398. MIR domains follow at residues 401–457 (IEFV…IEIV) and 465–523 (PTLL…IETH). Residues 603–623 (SVWPSSIAVCALIIHVIFLTL) traverse the membrane as a helical segment. Topologically, residues 624 to 639 (KWQRQCVILSDPVERD) are cytoplasmic. The chain crosses the membrane as a helical span at residues 640–660 (VFVMAAFYPLLAWLLHYMPFV). Over 661–665 (VMSRV) the chain is Lumenal. A helical transmembrane segment spans residues 666 to 686 (VYAHHYLPTLYFALMILSYYF). Topologically, residues 687–703 (DMITKRWATRNTGKFLR) are cytoplasmic. The helical transmembrane segment at 704 to 724 (LGAYIVYGSIVIAGFFYFSPF) threads the bilayer. Topologically, residues 725–753 (SFGMDGPVDDYAYLAWLPTWQIVEDIRNT) are lumenal.

Belongs to the glycosyltransferase 39 family. PMT3 and PMT5 form a functional heterodimer. Also forms a minor complex with PMT1.

It localises to the endoplasmic reticulum membrane. It carries out the reaction a di-trans,poly-cis-dolichyl beta-D-mannosyl phosphate + L-seryl-[protein] = 3-O-(alpha-D-mannosyl)-L-seryl-[protein] + a di-trans,poly-cis-dolichyl phosphate + H(+). It catalyses the reaction a di-trans,poly-cis-dolichyl beta-D-mannosyl phosphate + L-threonyl-[protein] = 3-O-(alpha-D-mannosyl)-L-threonyl-[protein] + a di-trans,poly-cis-dolichyl phosphate + H(+). It participates in protein modification; protein glycosylation. Its function is as follows. Protein O-mannosyltransferase involved in O-glycosylation which is essential for cell wall rigidity. Forms a heterodimeric complex with PMT5 and more rarely with PMT1 to transfer mannose from Dol-P-mannose to Ser or Thr residues on proteins. Seems to have redundant activity to PMT2. The polypeptide is Dolichyl-phosphate-mannose--protein mannosyltransferase 3 (Saccharomyces cerevisiae (strain ATCC 204508 / S288c) (Baker's yeast)).